Reading from the N-terminus, the 89-residue chain is Small ribosomal subunit protein bS20 (89 aa).

The disordered stretch occupies residues 1–28 (MTLANIKSAKKRAIQSEKRRQHNASQRS).

It belongs to the bacterial ribosomal protein bS20 family.

Its function is as follows. Binds directly to 16S ribosomal RNA. This Pasteurella multocida (strain Pm70) protein is Small ribosomal subunit protein bS20.